We begin with the raw amino-acid sequence, 207 residues long: Claudin-11 (207 aa).

M1 is a topological domain (cytoplasmic). The chain crosses the membrane as a helical span at residues 2–22 (VATCLQVVGFVTSFVGWIGII). Residues 23–82 (VTTSTNDWVVTCGYTIPTCRKLDELGSKGLWADCVMATGLYHCKPLVDILILPGYVQACR) are Extracellular-facing. A helical membrane pass occupies residues 83–103 (ALMIAASVLGLPAILLLLTVL). The Cytoplasmic segment spans residues 104 to 122 (PCIRMGHEPGVAKYRRAQL). The helical transmembrane segment at 123–143 (AGVMLVLVALCAMVATIWFPV) threads the bilayer. Topologically, residues 144–157 (CAHRETTIVSFGYS) are extracellular. A helical membrane pass occupies residues 158 to 178 (LYAGWIGAVLCLVGGCVIVCC). Residues 179–207 (AGDAQAFGENRFYYSSGSSSPTHAKSAHV) are Cytoplasmic-facing. 4 positions are modified to phosphoserine: S193, S194, S197, and S198.

It belongs to the claudin family. Interacts with tetraspanin-3/TSPAN3. Interacts with OCLN.

The protein resides in the cell junction. It localises to the tight junction. The protein localises to the cell membrane. Its function is as follows. Plays a major role in tight junction-specific obliteration of the intercellular space, through calcium-independent cell-adhesion activity. This is Claudin-11 (CLDN11) from Bos taurus (Bovine).